The chain runs to 204 residues: Holliday junction branch migration complex subunit RuvA (204 aa).

Residues 1–64 (MIGKLKGTIE…EDQIRLFGFM (64 aa)) are domain I. The tract at residues 65-143 (AVLEREWFNL…AFAGEATNIG (79 aa)) is domain II. The segment at 144-151 (FKQELGEG) is flexible linker. The interval 152–204 (VAPAPVSDAVSALTNLGYSRDQAANAIAAAMKVAGDEADSAKLIRLGLKELSR) is domain III.

The protein belongs to the RuvA family. As to quaternary structure, homotetramer. Forms an RuvA(8)-RuvB(12)-Holliday junction (HJ) complex. HJ DNA is sandwiched between 2 RuvA tetramers; dsDNA enters through RuvA and exits via RuvB. An RuvB hexamer assembles on each DNA strand where it exits the tetramer. Each RuvB hexamer is contacted by two RuvA subunits (via domain III) on 2 adjacent RuvB subunits; this complex drives branch migration. In the full resolvosome a probable DNA-RuvA(4)-RuvB(12)-RuvC(2) complex forms which resolves the HJ.

The protein localises to the cytoplasm. Functionally, the RuvA-RuvB-RuvC complex processes Holliday junction (HJ) DNA during genetic recombination and DNA repair, while the RuvA-RuvB complex plays an important role in the rescue of blocked DNA replication forks via replication fork reversal (RFR). RuvA specifically binds to HJ cruciform DNA, conferring on it an open structure. The RuvB hexamer acts as an ATP-dependent pump, pulling dsDNA into and through the RuvAB complex. HJ branch migration allows RuvC to scan DNA until it finds its consensus sequence, where it cleaves and resolves the cruciform DNA. The chain is Holliday junction branch migration complex subunit RuvA from Rhizobium rhizogenes (strain K84 / ATCC BAA-868) (Agrobacterium radiobacter).